The primary structure comprises 170 residues: ATP synthase subunit b (170 aa).

A helical membrane pass occupies residues 11–31; that stretch reads GLNTGDIIFQLIAMLILLALL.

It belongs to the ATPase B chain family. As to quaternary structure, F-type ATPases have 2 components, F(1) - the catalytic core - and F(0) - the membrane proton channel. F(1) has five subunits: alpha(3), beta(3), gamma(1), delta(1), epsilon(1). F(0) has three main subunits: a(1), b(2) and c(10-14). The alpha and beta chains form an alternating ring which encloses part of the gamma chain. F(1) is attached to F(0) by a central stalk formed by the gamma and epsilon chains, while a peripheral stalk is formed by the delta and b chains.

The protein localises to the cell membrane. F(1)F(0) ATP synthase produces ATP from ADP in the presence of a proton or sodium gradient. F-type ATPases consist of two structural domains, F(1) containing the extramembraneous catalytic core and F(0) containing the membrane proton channel, linked together by a central stalk and a peripheral stalk. During catalysis, ATP synthesis in the catalytic domain of F(1) is coupled via a rotary mechanism of the central stalk subunits to proton translocation. Functionally, component of the F(0) channel, it forms part of the peripheral stalk, linking F(1) to F(0). This is ATP synthase subunit b from Bacillus pumilus (strain SAFR-032).